The chain runs to 353 residues: Alternative oxidase, mitochondrial (353 aa).

Positions 25-45 (FRSTDDEDENNPSTELATDTT) are disordered. Residues 35–45 (NPSTELATDTT) are compositionally biased toward polar residues. Residues 153 to 173 (FLFLESIAGVPGMVAGMIRHL) traverse the membrane as a helical segment. Glutamate 157, glutamate 196, and histidine 199 together coordinate Fe cation. The helical transmembrane segment at 217 to 237 (LLIGQIIFYNLFFISYLISPA) threads the bilayer. The Fe cation site is built by glutamate 247, glutamate 301, and histidine 304.

The protein belongs to the alternative oxidase family. Requires Fe cation as cofactor.

It localises to the mitochondrion inner membrane. In terms of biological role, catalyzes cyanide-resistant oxygen consumption. May increase respiration when the cytochrome respiratory pathway is restricted, or in response to low temperatures. In Yarrowia lipolytica (strain CLIB 122 / E 150) (Yeast), this protein is Alternative oxidase, mitochondrial (AOX).